A 785-amino-acid polypeptide reads, in one-letter code: Formin-like protein 3 (785 aa).

The N-terminal stretch at 1–20 (MGRLRLAFLAISLVVFVCVS) is a signal peptide. The tract at residues 96 to 145 (YDWLAPASSPNEPPAETPDESSPSPSEETPSVVAPSQSVPGPPRPPPQRE) is disordered. Positions 115-134 (ESSPSPSEETPSVVAPSQSV) are enriched in low complexity. The chain crosses the membrane as a helical span at residues 154–174 (LIIAVASTAVLTFVFVALMFL). Disordered regions lie at residues 184-228 (AVGS…KKRS), 241-329 (EFST…APKT), and 730-785 (ETTK…SSPS). Over residues 201 to 223 (STGSTENSPTVASTSRKMFSVAS) the composition is skewed to polar residues. Over residues 256–303 (LKLPPGRSAPPPPPAAAPPPQPPPPPPPKPQPPPPPKIARPPPAPPKG) the composition is skewed to pro residues. An FH2 domain is found at 321 to 747 (DSETGAPKTK…SGKKESEMTT (427 aa)). The segment covering 745–754 (MTTSDSNQPS) has biased composition (polar residues). Residues 773 to 785 (SDDSDDEEDSSPS) are compositionally biased toward acidic residues.

Belongs to the formin-like family. Class-I subfamily.

Its subcellular location is the membrane. In terms of biological role, acts as actin nucleation factor that directs the formation of actin cables and polarized growth in pollen tubes. The polypeptide is Formin-like protein 3 (FH3) (Arabidopsis thaliana (Mouse-ear cress)).